A 160-amino-acid polypeptide reads, in one-letter code: Major pollen allergen Bet v 1-B (160 aa).

Brassinolide-binding residues include lysine 55, tyrosine 82, tyrosine 84, and asparagine 101.

Belongs to the BetVI family.

The protein resides in the cytoplasm. Its function is as follows. May be a general steroid carrier protein. This chain is Major pollen allergen Bet v 1-B (BETV1B), found in Betula pendula (European white birch).